A 670-amino-acid chain; its full sequence is Soluble lamin-associated protein of 75 kDa (670 aa).

Disordered stretches follow at residues 273-301 and 314-670; these read PKRP…SSEM and STSE…AKLT. A Phosphoserine modification is found at Ser350. The segment covering 358–375 has biased composition (polar residues); it reads SQTSLTASINKLESTARP. Over residues 378–387 the composition is skewed to acidic residues; it reads SSEEFLEEEP. Ser379 carries the phosphoserine modification. Over residues 414–423 the composition is skewed to basic and acidic residues; it reads EKQDGEKESE. The segment covering 442 to 453 has biased composition (acidic residues); that stretch reads TEEEDSTSEVLD. Ser449 is modified (phosphoserine). Residues 460–470 show a composition bias toward polar residues; that stretch reads PFNSSEDSTNL. 2 stretches are compositionally biased toward basic and acidic residues: residues 479 to 494 and 504 to 514; these read KPPE…RIPD and SDEKGHMEEKL. The residue at position 515 (Ser515) is a Phosphoserine. 2 stretches are compositionally biased toward polar residues: residues 558–569 and 579–591; these read ENLSPNTTSSLE and PQET…QSSL. A phosphoserine mark is found at Ser615, Ser618, and Ser635. Residues 651–670 are compositionally biased toward basic residues; the sequence is NLRRKAKGHKGPAKKKAKLT.

The protein belongs to the FAM169 family.

It is found in the nucleus envelope. The protein localises to the nucleus inner membrane. The polypeptide is Soluble lamin-associated protein of 75 kDa (FAM169A) (Homo sapiens (Human)).